The following is a 205-amino-acid chain: MQEYNQPLRIGVGGPVGSGKTALLEVLCKAMRDSYQIAVVTNDIYTQEDAKILTRAQALDADRIIGVETGGCPHTAIREDASMNLAAVEELAMRHKNLDIVFVESGGDNLSATFSPELADLTIYVIDVAEGEKIPRKGGPGITHSDLLVINKIDLAPYVGASLEVMEADTAKMRPVKPYVFTNLKEKVGLETIIDFIIDKGMLRR.

A GTP-binding site is contributed by 14 to 21 (GPVGSGKT).

This sequence belongs to the SIMIBI class G3E GTPase family. UreG subfamily. Homodimer. UreD, UreF and UreG form a complex that acts as a GTP-hydrolysis-dependent molecular chaperone, activating the urease apoprotein by helping to assemble the nickel containing metallocenter of UreC. The UreE protein probably delivers the nickel.

It is found in the cytoplasm. In terms of biological role, facilitates the functional incorporation of the urease nickel metallocenter. This process requires GTP hydrolysis, probably effectuated by UreG. This chain is Urease accessory protein UreG, found in Proteus mirabilis (strain HI4320).